Reading from the N-terminus, the 30-residue chain is GFPCGESCVFIPCISAAIGCSCKNKVCYRN.

A cross-link (cyclopeptide (Gly-Asn)) is located at residues 1-30; it reads GFPCGESCVFIPCISAAIGCSCKNKVCYRN. 3 disulfides stabilise this stretch: Cys-4–Cys-20, Cys-8–Cys-22, and Cys-13–Cys-27.

In terms of processing, this is a cyclic peptide.

Its function is as follows. Probably participates in a plant defense mechanism. Has anti-HIV activity. The polypeptide is Cycloviolin-D (Leonia cymosa (Sacha uba)).